A 78-amino-acid polypeptide reads, in one-letter code: Large ribosomal subunit protein eL20 (78 aa).

Belongs to the eukaryotic ribosomal protein eL20 family. In terms of assembly, part of the 50S ribosomal subunit. Binds 23S rRNA.

This is Large ribosomal subunit protein eL20 from Thermococcus sibiricus (strain DSM 12597 / MM 739).